Here is a 283-residue protein sequence, read N- to C-terminus: Hydroxyacylglutathione hydrolase-like protein (283 aa).

His54, His56, Asp58, His59, His110, Asp134, and His173 together coordinate Zn(2+).

This sequence belongs to the metallo-beta-lactamase superfamily. Glyoxalase II family. The cofactor is Zn(2+).

Functionally, hydrolase acting on ester bonds. This chain is Hydroxyacylglutathione hydrolase-like protein (Haghl), found in Mus musculus (Mouse).